We begin with the raw amino-acid sequence, 156 residues long: ATP synthase subunit b 2 (156 aa).

A helical membrane pass occupies residues 11 to 31 (LLAFIFFVWFCMKFVWPPIMG).

Belongs to the ATPase B chain family. F-type ATPases have 2 components, F(1) - the catalytic core - and F(0) - the membrane proton channel. F(1) has five subunits: alpha(3), beta(3), gamma(1), delta(1), epsilon(1). F(0) has three main subunits: a(1), b(2) and c(10-14). The alpha and beta chains form an alternating ring which encloses part of the gamma chain. F(1) is attached to F(0) by a central stalk formed by the gamma and epsilon chains, while a peripheral stalk is formed by the delta and b chains.

It localises to the cell inner membrane. Its function is as follows. F(1)F(0) ATP synthase produces ATP from ADP in the presence of a proton or sodium gradient. F-type ATPases consist of two structural domains, F(1) containing the extramembraneous catalytic core and F(0) containing the membrane proton channel, linked together by a central stalk and a peripheral stalk. During catalysis, ATP synthesis in the catalytic domain of F(1) is coupled via a rotary mechanism of the central stalk subunits to proton translocation. In terms of biological role, component of the F(0) channel, it forms part of the peripheral stalk, linking F(1) to F(0). The chain is ATP synthase subunit b 2 from Pseudoalteromonas atlantica (strain T6c / ATCC BAA-1087).